The primary structure comprises 298 residues: MNPGYRGRFAPSPTGPLHFGSLVGALASWLDARAHGGTWLVRIEDLDGPRTVPGAADDILAMLAHFGMTPDEPPVWQSTRDAAYTAALEQLVAAGLVYPCGCTRKEIADSLRAAHERHTTLAYPGTCRTGLHGKPARAWRLRVPDGCDAVVTFDDRWQHTQSQNLATEVGDFVLKRADGQWAYQLAVVFDDADAGITHVVRGADLLDSTARQIYLQRCLGVPTPEYLHVPVVVDANGEKLSKQTGATALERNDPLPALQAAAAHLGLANDGDLPGGTLDAFYTAATDAWARRFGPRAG.

Residues 8–12 and E44 each bind L-glutamate; that span reads RFAPS. A 'HIGH' region motif is present at residues 11–21; it reads PSPTGPLHFGS. The Zn(2+) site is built by C100, C102, Y123, and C127. Y183 and R201 together coordinate L-glutamate. The 'KMSKS' region motif lies at 239–243; that stretch reads KLSKQ. Residue K242 coordinates ATP.

It belongs to the class-I aminoacyl-tRNA synthetase family. GluQ subfamily. Zn(2+) serves as cofactor.

In terms of biological role, catalyzes the tRNA-independent activation of glutamate in presence of ATP and the subsequent transfer of glutamate onto a tRNA(Asp). Glutamate is transferred on the 2-amino-5-(4,5-dihydroxy-2-cyclopenten-1-yl) moiety of the queuosine in the wobble position of the QUC anticodon. This chain is Glutamyl-Q tRNA(Asp) synthetase, found in Burkholderia orbicola (strain MC0-3).